Reading from the N-terminus, the 200-residue chain is Recombination protein RecR (200 aa).

The C4-type zinc finger occupies 59-74; the sequence is CSVCGSLDTSDPCAIC. One can recognise a Toprim domain in the interval 82–177; it reads RLLCVVEEVG…SVTMLARGVP (96 aa).

Belongs to the RecR family.

May play a role in DNA repair. It seems to be involved in an RecBC-independent recombinational process of DNA repair. It may act with RecF and RecO. This chain is Recombination protein RecR, found in Caulobacter sp. (strain K31).